The following is a 396-amino-acid chain: Acetate kinase (396 aa).

Asn-7 is a Mg(2+) binding site. Lys-14 is an ATP binding site. A substrate-binding site is contributed by Arg-89. Asp-146 functions as the Proton donor/acceptor in the catalytic mechanism. ATP is bound by residues 206–210 (HLGNG), 280–282 (DLR), and 328–332 (GIGEN). Residue Glu-382 coordinates Mg(2+).

This sequence belongs to the acetokinase family. In terms of assembly, homodimer. The cofactor is Mg(2+). Mn(2+) is required as a cofactor.

The protein resides in the cytoplasm. The enzyme catalyses acetate + ATP = acetyl phosphate + ADP. The protein operates within metabolic intermediate biosynthesis; acetyl-CoA biosynthesis; acetyl-CoA from acetate: step 1/2. Its function is as follows. Catalyzes the formation of acetyl phosphate from acetate and ATP. Can also catalyze the reverse reaction. This Maridesulfovibrio salexigens (strain ATCC 14822 / DSM 2638 / NCIMB 8403 / VKM B-1763) (Desulfovibrio salexigens) protein is Acetate kinase.